Reading from the N-terminus, the 415-residue chain is Multidrug resistance protein MdtA (415 aa).

Residues 1–21 form the signal peptide; it reads MKGSYKSRWVIVIVVVIAAIA. Positions 31 to 47 are enriched in polar residues; it reads DSQSAAPGATKQAQQSP. Disordered regions lie at residues 31–56 and 390–415; these read DSQS…GMRA and VVET…GARS. The segment covering 399–415 has biased composition (basic and acidic residues); the sequence is PEEKATSREYAKKGARS.

It belongs to the membrane fusion protein (MFP) (TC 8.A.1) family. In terms of assembly, part of a tripartite efflux system composed of MdtA, MdtB and MdtC.

The protein localises to the cell inner membrane. Functionally, the MdtABC tripartite complex confers resistance against novobiocin and deoxycholate. The polypeptide is Multidrug resistance protein MdtA (Escherichia coli O6:H1 (strain CFT073 / ATCC 700928 / UPEC)).